Reading from the N-terminus, the 134-residue chain is MTLNLCVLTPNRIIWDSEVKEIILSTNSGQIGVLPNHAPIATAIDIGILRIRLDDQWLTMALMGGFARIGNNEITILVNDAEKGSDIDPQEAQRTLEIAEANLSKAEGKRQVIEANLALRRARARVEAINAISY.

This sequence belongs to the ATPase epsilon chain family. As to quaternary structure, F-type ATPases have 2 components, CF(1) - the catalytic core - and CF(0) - the membrane proton channel. CF(1) has five subunits: alpha(3), beta(3), gamma(1), delta(1), epsilon(1). CF(0) has three main subunits: a, b and c.

Its subcellular location is the plastid. The protein localises to the chloroplast thylakoid membrane. Produces ATP from ADP in the presence of a proton gradient across the membrane. The polypeptide is ATP synthase epsilon chain, chloroplastic (Nymphaea alba (White water-lily)).